A 355-amino-acid chain; its full sequence is UDP-N-acetylglucosamine--N-acetylmuramyl-(pentapeptide) pyrophosphoryl-undecaprenol N-acetylglucosamine transferase (355 aa).

UDP-N-acetyl-alpha-D-glucosamine is bound by residues 15-17 (TGG), Asn-127, Arg-163, Ser-191, Ile-244, 263-268 (ALTVSE), and Gln-288.

It belongs to the glycosyltransferase 28 family. MurG subfamily.

It is found in the cell inner membrane. It carries out the reaction di-trans,octa-cis-undecaprenyl diphospho-N-acetyl-alpha-D-muramoyl-L-alanyl-D-glutamyl-meso-2,6-diaminopimeloyl-D-alanyl-D-alanine + UDP-N-acetyl-alpha-D-glucosamine = di-trans,octa-cis-undecaprenyl diphospho-[N-acetyl-alpha-D-glucosaminyl-(1-&gt;4)]-N-acetyl-alpha-D-muramoyl-L-alanyl-D-glutamyl-meso-2,6-diaminopimeloyl-D-alanyl-D-alanine + UDP + H(+). The protein operates within cell wall biogenesis; peptidoglycan biosynthesis. Cell wall formation. Catalyzes the transfer of a GlcNAc subunit on undecaprenyl-pyrophosphoryl-MurNAc-pentapeptide (lipid intermediate I) to form undecaprenyl-pyrophosphoryl-MurNAc-(pentapeptide)GlcNAc (lipid intermediate II). In Salmonella arizonae (strain ATCC BAA-731 / CDC346-86 / RSK2980), this protein is UDP-N-acetylglucosamine--N-acetylmuramyl-(pentapeptide) pyrophosphoryl-undecaprenol N-acetylglucosamine transferase.